Here is a 136-residue protein sequence, read N- to C-terminus: Large ribosomal subunit protein uL16 (136 aa).

It belongs to the universal ribosomal protein uL16 family. Part of the 50S ribosomal subunit.

In terms of biological role, binds 23S rRNA and is also seen to make contacts with the A and possibly P site tRNAs. In Ehrlichia ruminantium (strain Gardel), this protein is Large ribosomal subunit protein uL16.